We begin with the raw amino-acid sequence, 154 residues long: Protein X (154 aa).

The interval P68–F117 is mitochondrial targeting sequence.

Belongs to the orthohepadnavirus protein X family. As to quaternary structure, may form homodimer. May interact with host CEBPA, CFLAR, CREB1, DDB1, E4F1, HBXIP, HSPD1/HSP60, NFKBIA, POLR2E and SMAD4. Interacts with host SMC5-SMC6 complex and induces its degradation. Interacts with host TRPC4AP; leading to prevent ubiquitination of TRPC4AP. Interacts with host PLSCR1; this interaction promotes ubiquitination and degradation of HBx and impairs HBx-mediated cell proliferation. Post-translationally, a fraction may be phosphorylated in insect cells and HepG2 cells, a human hepatoblastoma cell line. Phosphorylated in vitro by host protein kinase C or mitogen-activated protein kinase. N-acetylated in insect cells.

It localises to the host cytoplasm. The protein localises to the host nucleus. The protein resides in the host mitochondrion. In terms of biological role, multifunctional protein that plays a role in silencing host antiviral defenses and promoting viral transcription. Does not seem to be essential for HBV infection. May be directly involved in development of cirrhosis and liver cancer (hepatocellular carcinoma). Most of cytosolic activities involve modulation of cytosolic calcium. The effect on apoptosis is controversial depending on the cell types in which the studies have been conducted. May induce apoptosis by localizing in mitochondria and causing loss of mitochondrial membrane potential. May also modulate apoptosis by binding host CFLAR, a key regulator of the death-inducing signaling complex (DISC). Promotes viral transcription by using the host E3 ubiquitin ligase DDB1 to target the SMC5-SMC6 complex to proteasomal degradation. This host complex would otherwise bind to viral episomal DNA, and prevents its transcription. Moderately stimulates transcription of many different viral and cellular transcription elements. Promoters and enhancers stimulated by HBx contain DNA binding sites for NF-kappa-B, AP-1, AP-2, c-EBP, ATF/CREB, or the calcium-activated factor NF-AT. The polypeptide is Protein X (Hepatitis B virus genotype E (isolate Cote d'Ivoire/ABI-212/2003) (HBV-E)).